The chain runs to 204 residues: Fruiting body protein SC7 (204 aa).

An N-terminal signal peptide occupies residues 1 to 16 (MKLTVILLTAVLAASA). One can recognise an SCP domain in the interval 62–185 (LKAHNNERAQ…KTLWYYVCNY (124 aa)). N-linked (GlcNAc...) asparagine glycans are attached at residues Asn80, Asn118, and Asn134.

This sequence belongs to the CRISP family.

The protein resides in the secreted. This is Fruiting body protein SC7 (SC7) from Schizophyllum commune (Split gill fungus).